Reading from the N-terminus, the 206-residue chain is Small ribosomal subunit protein uS4 (206 aa).

The interval 23–47 (AKSPLNRREYGPGQHGQRRKGKLSD) is disordered. One can recognise an S4 RNA-binding domain in the interval 94-157 (RRLDAVIYRA…RQLAIVLESV (64 aa)).

It belongs to the universal ribosomal protein uS4 family. In terms of assembly, part of the 30S ribosomal subunit. Contacts protein S5. The interaction surface between S4 and S5 is involved in control of translational fidelity.

Its function is as follows. One of the primary rRNA binding proteins, it binds directly to 16S rRNA where it nucleates assembly of the body of the 30S subunit. With S5 and S12 plays an important role in translational accuracy. This is Small ribosomal subunit protein uS4 from Paracoccus denitrificans (strain Pd 1222).